Consider the following 397-residue polypeptide: Protein EMSY-LIKE 3 (397 aa).

Residues 1 to 40 are disordered; sequence MDYRPSDSSGTDDDLPPSHQGRYQRNARPTGNGRPSVLNS. Residues 50 to 137 form the ENT domain; sequence METQIHLIEQ…PQLVHDAPSP (88 aa). Positions 81 to 107 form a coiled coil; sequence ESLITELRKELRVSDEEHRELLSRVNA. Disordered stretches follow at residues 122–221 and 284–330; these read SLQS…SYDP and DPGI…TQNG. The span at 164-174 shows a compositional bias: polar residues; that stretch reads LHPSMQPSSSA. Positions 175–182 match the Nuclear localization signal motif; the sequence is LRRGGPPP. A coiled-coil region spans residues 363-389; that stretch reads AEVEKAKRVLRDHELALMDAIAKLEEI. The residue at position 390 (serine 390) is a Phosphoserine.

The protein resides in the nucleus. Functionally, probably involved in the regulation of chromatin states. Contributes to basal immunity. This chain is Protein EMSY-LIKE 3, found in Arabidopsis thaliana (Mouse-ear cress).